The sequence spans 408 residues: E3 ubiquitin-protein ligase IE2 (408 aa).

The span at 1–10 shows a compositional bias: polar residues; sequence MSRQINAATP. Disordered regions lie at residues 1-67 and 176-199; these read MSRQ…ENVQ and QSPD…QSEP. The span at 13 to 25 shows a compositional bias: basic residues; it reads SRRHRLSLSRRRI. The segment covering 30-47 has biased composition (low complexity); sequence SPEAQPSSSSRSQPSSSS. Repeat copies occupy residues 34–41, 42–49, 51–54, and 55–58. A 2 X 8 AA tandem repeats of Q-P-S-S-S-S-R-S region spans residues 34 to 49; sequence QPSSSSRSQPSSSSRS. The segment at 51-58 is 2 X 4 AA tandem repeats of R-R-Q-E; that stretch reads RRQERRQE. A compositionally biased stretch (low complexity) spans 183–197; it reads SPQSPQPQQQQQQQS. An RING-type zinc finger spans residues 207 to 255; sequence CNICFTTFKDTKNVNSSFVTSIHCNHAVCFKCYVKIIMDNSVYKCFCSA.

It belongs to the alphabaculovirus IE2 protein family. In terms of assembly, homooligomer. In terms of processing, auto-ubiquitinated.

The protein resides in the host nucleus. The catalysed reaction is S-ubiquitinyl-[E2 ubiquitin-conjugating enzyme]-L-cysteine + [acceptor protein]-L-lysine = [E2 ubiquitin-conjugating enzyme]-L-cysteine + N(6)-ubiquitinyl-[acceptor protein]-L-lysine.. In terms of biological role, RING-finger E3 ubiquitin ligase that plays an important regulatory role during the initial stages of infection. Migrates to specific nuclear foci early in infection supposely to prepare the sites for viral transcription and replication by targeting and ubiquitinating host proteins. Acts as a transcriptional activator and activates a number of viral promoters including itself, IE1 and the promoter of 39K gene. The chain is E3 ubiquitin-protein ligase IE2 (IE2) from Lepidoptera (butterflies and moths).